The primary structure comprises 131 residues: Large-conductance mechanosensitive channel (131 aa).

Transmembrane regions (helical) follow at residues 14-34 (VMDM…VTSL) and 71-91 (GNFI…FLLV).

Belongs to the MscL family. In terms of assembly, homopentamer.

Its subcellular location is the cell inner membrane. Functionally, channel that opens in response to stretch forces in the membrane lipid bilayer. May participate in the regulation of osmotic pressure changes within the cell. This chain is Large-conductance mechanosensitive channel, found in Dinoroseobacter shibae (strain DSM 16493 / NCIMB 14021 / DFL 12).